The following is a 190-amino-acid chain: Peptidyl-tRNA hydrolase (190 aa).

Tyr-14 provides a ligand contact to tRNA. Catalysis depends on His-19, which acts as the Proton acceptor. Tyr-64, Asn-66, and Asn-113 together coordinate tRNA.

The protein belongs to the PTH family. In terms of assembly, monomer.

Its subcellular location is the cytoplasm. The catalysed reaction is an N-acyl-L-alpha-aminoacyl-tRNA + H2O = an N-acyl-L-amino acid + a tRNA + H(+). Hydrolyzes ribosome-free peptidyl-tRNAs (with 1 or more amino acids incorporated), which drop off the ribosome during protein synthesis, or as a result of ribosome stalling. In terms of biological role, catalyzes the release of premature peptidyl moieties from peptidyl-tRNA molecules trapped in stalled 50S ribosomal subunits, and thus maintains levels of free tRNAs and 50S ribosomes. The polypeptide is Peptidyl-tRNA hydrolase (Gemmatimonas aurantiaca (strain DSM 14586 / JCM 11422 / NBRC 100505 / T-27)).